We begin with the raw amino-acid sequence, 401 residues long: 8-amino-7-oxononanoate synthase (401 aa).

Arginine 24 contacts substrate. 111–112 is a pyridoxal 5'-phosphate binding site; it reads GF. Histidine 137 is a binding site for substrate. Serine 183, histidine 211, and threonine 240 together coordinate pyridoxal 5'-phosphate. N6-(pyridoxal phosphate)lysine is present on lysine 243. Threonine 357 lines the substrate pocket.

It belongs to the class-II pyridoxal-phosphate-dependent aminotransferase family. BioF subfamily. Homodimer. The cofactor is pyridoxal 5'-phosphate.

The enzyme catalyses 6-carboxyhexanoyl-[ACP] + L-alanine + H(+) = (8S)-8-amino-7-oxononanoate + holo-[ACP] + CO2. It participates in cofactor biosynthesis; biotin biosynthesis. Its function is as follows. Catalyzes the decarboxylative condensation of pimeloyl-[acyl-carrier protein] and L-alanine to produce 8-amino-7-oxononanoate (AON), [acyl-carrier protein], and carbon dioxide. This is 8-amino-7-oxononanoate synthase from Xanthomonas campestris pv. campestris (strain 8004).